The primary structure comprises 88 residues: MKKFQAVIKDPVGIHARPASILASEASKFKSELKLVAPSGVEGNIKSIINLMSLGIRHNDNITIKADGADEEEALAAIKACLEKNKVI.

Residues 1 to 88 enclose the HPr domain; it reads MKKFQAVIKD…KACLEKNKVI (88 aa). His15 functions as the Pros-phosphohistidine intermediate in the catalytic mechanism. Ser47 carries the post-translational modification Phosphoserine; by HPrK/P.

The protein belongs to the HPr family.

It is found in the cytoplasm. Its activity is regulated as follows. Phosphorylation on Ser-47 inhibits the phosphoryl transfer from enzyme I to HPr. Its function is as follows. General (non sugar-specific) component of the phosphoenolpyruvate-dependent sugar phosphotransferase system (sugar PTS). This major carbohydrate active-transport system catalyzes the phosphorylation of incoming sugar substrates concomitantly with their translocation across the cell membrane. The phosphoryl group from phosphoenolpyruvate (PEP) is transferred to the phosphoryl carrier protein HPr by enzyme I. Phospho-HPr then transfers it to the PTS EIIA domain. In terms of biological role, P-Ser-HPr interacts with the catabolite control protein A (CcpA), forming a complex that binds to DNA at the catabolite response elements cre, operator sites preceding a large number of catabolite-regulated genes. Thus, P-Ser-HPr is a corepressor in carbon catabolite repression (CCR), a mechanism that allows bacteria to coordinate and optimize the utilization of available carbon sources. P-Ser-HPr also plays a role in inducer exclusion, in which it probably interacts with several non-PTS permeases and inhibits their transport activity. In Mycoplasma genitalium (strain ATCC 33530 / DSM 19775 / NCTC 10195 / G37) (Mycoplasmoides genitalium), this protein is Phosphocarrier protein HPr (ptsH).